A 154-amino-acid chain; its full sequence is uncharacterized protein (154 aa).

A helical membrane pass occupies residues 23–43; the sequence is SAVALVTFAGAALSGVIPAIA.

The protein localises to the membrane. This is an uncharacterized protein from Mycobacterium tuberculosis (strain CDC 1551 / Oshkosh).